A 214-amino-acid chain; its full sequence is tRNA (guanine-N(7)-)-methyltransferase (214 aa).

Residues Glu44, Glu69, Asp96, and Asp118 each contribute to the S-adenosyl-L-methionine site. Asp118 is a catalytic residue. Residues Lys122, Asp154, and 191-194 contribute to the substrate site; that span reads TEYE.

Belongs to the class I-like SAM-binding methyltransferase superfamily. TrmB family.

The enzyme catalyses guanosine(46) in tRNA + S-adenosyl-L-methionine = N(7)-methylguanosine(46) in tRNA + S-adenosyl-L-homocysteine. It participates in tRNA modification; N(7)-methylguanine-tRNA biosynthesis. Its function is as follows. Catalyzes the formation of N(7)-methylguanine at position 46 (m7G46) in tRNA. This Listeria innocua serovar 6a (strain ATCC BAA-680 / CLIP 11262) protein is tRNA (guanine-N(7)-)-methyltransferase.